Consider the following 127-residue polypeptide: Fluoride-specific ion channel FluC (127 aa).

4 helical membrane passes run 4-24, 35-55, 71-91, and 99-119; these read FTLL…RYLI, GFPY…GILM, IIGL…MDNV, and FIKA…ACFI. Gly78 and Thr81 together coordinate Na(+).

It belongs to the fluoride channel Fluc/FEX (TC 1.A.43) family.

The protein resides in the cell inner membrane. The enzyme catalyses fluoride(in) = fluoride(out). Its activity is regulated as follows. Na(+) is not transported, but it plays an essential structural role and its presence is essential for fluoride channel function. Functionally, fluoride-specific ion channel. Important for reducing fluoride concentration in the cell, thus reducing its toxicity. This chain is Fluoride-specific ion channel FluC, found in Photobacterium profundum (strain SS9).